Here is a 562-residue protein sequence, read N- to C-terminus: Berberine bridge enzyme-like C-1 (562 aa).

Residues 1 to 19 form the signal peptide; that stretch reads MFPLIILISFSFTFLSASA. 2 N-linked (GlcNAc...) asparagine glycosylation sites follow: N29 and N41. The cysteines at positions 33 and 90 are disulfide-linked. In terms of domain architecture, FAD-binding PCMH-type spans 68 to 244; that stretch reads NMPKPTVIIL…YAWKIRLVKV (177 aa). H105 carries the post-translational modification Pros-8alpha-FAD histidine. 3 N-linked (GlcNAc...) asparagine glycosylation sites follow: N359, N498, and N558.

The protein belongs to the oxygen-dependent FAD-linked oxidoreductase family. Requires FAD as cofactor. Mostly expressed in roots.

The protein localises to the vacuole. It participates in alkaloid biosynthesis; nicotine biosynthesis. Functionally, involved in the biosynthesis of pyridine alkaloid natural products, leading mainly to the production of anabasine, anatabine, nicotine and nornicotine, effective deterrents against herbivores with antiparasitic and pesticide properties (neurotoxins); nornicotine serves as the precursor in the synthesis of the carcinogen compound N'-nitrosonornicotine (NNN). Catalyzes a late oxidation step subsequent to the pyridine ring condensation reaction in the biosynthesis of alkaloids. This is Berberine bridge enzyme-like C-1 from Nicotiana tabacum (Common tobacco).